Reading from the N-terminus, the 301-residue chain is ATP synthase gamma chain (301 aa).

The protein belongs to the ATPase gamma chain family. F-type ATPases have 2 components, CF(1) - the catalytic core - and CF(0) - the membrane proton channel. CF(1) has five subunits: alpha(3), beta(3), gamma(1), delta(1), epsilon(1). CF(0) has three main subunits: a, b and c.

It is found in the cell inner membrane. Functionally, produces ATP from ADP in the presence of a proton gradient across the membrane. The gamma chain is believed to be important in regulating ATPase activity and the flow of protons through the CF(0) complex. The polypeptide is ATP synthase gamma chain (Bordetella avium (strain 197N)).